A 256-amino-acid polypeptide reads, in one-letter code: Large ribosomal subunit protein bL28m (256 aa).

A mitochondrion-targeting transit peptide spans 1–55 (MPLHKVPVGLWKRLRLREGIYSRLPAHYLRSLEEARTPTPVHFRPHGAKFKINPK).

The protein belongs to the bacterial ribosomal protein bL28 family. Component of the mitochondrial ribosome large subunit (39S) which comprises a 16S rRNA and about 50 distinct proteins. Interacts with OXA1L.

It localises to the mitochondrion. In Bos taurus (Bovine), this protein is Large ribosomal subunit protein bL28m (MRPL28).